We begin with the raw amino-acid sequence, 443 residues long: Mitochondrial enolase superfamily member 1 (443 aa).

Residues 24 to 26 (GSD) and Y34 each bind substrate. At S148 the chain carries Phosphoserine. K220 contacts substrate. K222 functions as the Proton donor/acceptor in the catalytic mechanism. Position 250 (D250) interacts with Mg(2+). Substrate contacts are provided by residues N252, E276, E305, 355-357 (HAG), and E386. Mg(2+)-binding residues include E276 and E305. H355 is a catalytic residue.

The protein belongs to the mandelate racemase/muconate lactonizing enzyme family. ENOSF1 subfamily. Mg(2+) is required as a cofactor. Could be sumoylated.

Its subcellular location is the mitochondrion. The enzyme catalyses L-fuconate = 2-dehydro-3-deoxy-L-fuconate + H2O. Functionally, plays a role in the catabolism of L-fucose, a sugar that is part of the carbohydrates that are attached to cellular glycoproteins. Catalyzes the dehydration of L-fuconate to 2-keto-3-deoxy-L-fuconate by the abstraction of the 2-proton to generate an enediolate intermediate that is stabilized by the magnesium ion. May down-regulate thymidylate synthase activity, possibly already at the RNA level, by promoting the degradation of TYMS mRNA via an antisense RNA-based mechanism. The sequence is that of Mitochondrial enolase superfamily member 1 (ENOSF1) from Bos taurus (Bovine).